A 448-amino-acid chain; its full sequence is Putative RNA-ligase (448 aa).

The protein belongs to the asfivirus M448R family.

It localises to the virion. This Ornithodoros (relapsing fever ticks) protein is Putative RNA-ligase.